A 432-amino-acid polypeptide reads, in one-letter code: Probable exopolygalacturonase X (432 aa).

Residues 1–23 form the signal peptide; that stretch reads MKFSYSFVQVVTLLLSLSPSVEG. Asparagine 113, asparagine 129, and asparagine 199 each carry an N-linked (GlcNAc...) asparagine glycan. A PbH1 1 repeat occupies 231–252; sequence SDNIVIQNSVINNGDDCVSFKP. Catalysis depends on aspartate 245, which acts as the Proton donor. Cysteine 247 and cysteine 264 form a disulfide bridge. N-linked (GlcNAc...) asparagine glycosylation is found at asparagine 253 and asparagine 265. 3 PbH1 repeats span residues 254–274, 285–306, and 327–348; these read STNI…SVGS, VQNV…RIKV, and VKNV…EVTQ. Histidine 268 is a catalytic residue. N-linked (GlcNAc...) asparagine glycans are attached at residues asparagine 292, asparagine 297, asparagine 329, asparagine 354, and asparagine 364. One copy of the PbH1 5 repeat lies at 362–394; the sequence is PSNLTISDIHFKNFRGTTSGKRDPNVGTIVCSS. An intrachain disulfide couples cysteine 392 to cysteine 398.

Belongs to the glycosyl hydrolase 28 family.

It localises to the secreted. The enzyme catalyses [(1-&gt;4)-alpha-D-galacturonosyl](n) + H2O = alpha-D-galacturonate + [(1-&gt;4)-alpha-D-galacturonosyl](n-1). In terms of biological role, specific in hydrolyzing the terminal glycosidic bond of polygalacturonic acid and oligogalacturonates. The sequence is that of Probable exopolygalacturonase X (pgaX) from Aspergillus fumigatus (strain CBS 144.89 / FGSC A1163 / CEA10) (Neosartorya fumigata).